Consider the following 356-residue polypeptide: S-adenosylmethionine:tRNA ribosyltransferase-isomerase (356 aa).

This sequence belongs to the QueA family. As to quaternary structure, monomer.

The protein resides in the cytoplasm. It catalyses the reaction 7-aminomethyl-7-carbaguanosine(34) in tRNA + S-adenosyl-L-methionine = epoxyqueuosine(34) in tRNA + adenine + L-methionine + 2 H(+). Its pathway is tRNA modification; tRNA-queuosine biosynthesis. Functionally, transfers and isomerizes the ribose moiety from AdoMet to the 7-aminomethyl group of 7-deazaguanine (preQ1-tRNA) to give epoxyqueuosine (oQ-tRNA). This Enterobacter sp. (strain 638) protein is S-adenosylmethionine:tRNA ribosyltransferase-isomerase.